A 101-amino-acid chain; its full sequence is Protein translation factor SUI1 homolog (101 aa).

Belongs to the SUI1 family.

The protein is Protein translation factor SUI1 homolog of Methanothermobacter thermautotrophicus (strain ATCC 29096 / DSM 1053 / JCM 10044 / NBRC 100330 / Delta H) (Methanobacterium thermoautotrophicum).